The sequence spans 441 residues: Serine--tRNA ligase (441 aa).

Thr250 to Glu252 is an L-serine binding site. Residues Arg281 to Glu283 and Val297 each bind ATP. Glu304 is a binding site for L-serine. An ATP-binding site is contributed by Glu368–Ser371. Thr402 serves as a coordination point for L-serine.

It belongs to the class-II aminoacyl-tRNA synthetase family. Type-1 seryl-tRNA synthetase subfamily. In terms of assembly, homodimer. The tRNA molecule binds across the dimer.

It localises to the cytoplasm. It catalyses the reaction tRNA(Ser) + L-serine + ATP = L-seryl-tRNA(Ser) + AMP + diphosphate + H(+). The catalysed reaction is tRNA(Sec) + L-serine + ATP = L-seryl-tRNA(Sec) + AMP + diphosphate + H(+). Its pathway is aminoacyl-tRNA biosynthesis; selenocysteinyl-tRNA(Sec) biosynthesis; L-seryl-tRNA(Sec) from L-serine and tRNA(Sec): step 1/1. In terms of biological role, catalyzes the attachment of serine to tRNA(Ser). Is also able to aminoacylate tRNA(Sec) with serine, to form the misacylated tRNA L-seryl-tRNA(Sec), which will be further converted into selenocysteinyl-tRNA(Sec). The chain is Serine--tRNA ligase from Thermoplasma volcanium (strain ATCC 51530 / DSM 4299 / JCM 9571 / NBRC 15438 / GSS1).